We begin with the raw amino-acid sequence, 186 residues long: Nucleoside triphosphate pyrophosphatase (186 aa).

The active-site Proton acceptor is Asp-68.

The protein belongs to the Maf family. It depends on a divalent metal cation as a cofactor.

It localises to the cytoplasm. The enzyme catalyses a ribonucleoside 5'-triphosphate + H2O = a ribonucleoside 5'-phosphate + diphosphate + H(+). The catalysed reaction is a 2'-deoxyribonucleoside 5'-triphosphate + H2O = a 2'-deoxyribonucleoside 5'-phosphate + diphosphate + H(+). Functionally, nucleoside triphosphate pyrophosphatase. May have a dual role in cell division arrest and in preventing the incorporation of modified nucleotides into cellular nucleic acids. The chain is Nucleoside triphosphate pyrophosphatase from Prochlorococcus marinus (strain MIT 9303).